The chain runs to 334 residues: Anthranilate phosphoribosyltransferase (334 aa).

5-phospho-alpha-D-ribose 1-diphosphate-binding positions include Gly81, Gly84 to Asp85, Thr89, Asn91 to Thr94, Lys109 to Ser117, and Ala121. Position 81 (Gly81) interacts with anthranilate. A Mg(2+)-binding site is contributed by Ser93. Asn112 lines the anthranilate pocket. Arg167 serves as a coordination point for anthranilate. Residues Asp225 and Glu226 each contribute to the Mg(2+) site.

The protein belongs to the anthranilate phosphoribosyltransferase family. Homodimer. The cofactor is Mg(2+).

It catalyses the reaction N-(5-phospho-beta-D-ribosyl)anthranilate + diphosphate = 5-phospho-alpha-D-ribose 1-diphosphate + anthranilate. Its pathway is amino-acid biosynthesis; L-tryptophan biosynthesis; L-tryptophan from chorismate: step 2/5. Its function is as follows. Catalyzes the transfer of the phosphoribosyl group of 5-phosphorylribose-1-pyrophosphate (PRPP) to anthranilate to yield N-(5'-phosphoribosyl)-anthranilate (PRA). The polypeptide is Anthranilate phosphoribosyltransferase (Histophilus somni (strain 2336) (Haemophilus somnus)).